The primary structure comprises 179 residues: Small ribosomal subunit protein uS5 (179 aa).

The 64-residue stretch at 22–85 (MIEKLVAVNR…EYARKRMSNV (64 aa)) folds into the S5 DRBM domain.

The protein belongs to the universal ribosomal protein uS5 family. As to quaternary structure, part of the 30S ribosomal subunit. Contacts proteins S4 and S8.

In terms of biological role, with S4 and S12 plays an important role in translational accuracy. Located at the back of the 30S subunit body where it stabilizes the conformation of the head with respect to the body. This Xylella fastidiosa (strain M23) protein is Small ribosomal subunit protein uS5.